Reading from the N-terminus, the 255-residue chain is Small ribosomal subunit protein uS2 (255 aa).

The segment at 230 to 255 (QSSSGRDLGASSEVPVEPALEEAAEG) is disordered.

It belongs to the universal ribosomal protein uS2 family.

This Rhizobium etli (strain CIAT 652) protein is Small ribosomal subunit protein uS2.